We begin with the raw amino-acid sequence, 400 residues long: Acetate kinase (400 aa).

Asn-7 provides a ligand contact to Mg(2+). Residue Lys-14 coordinates ATP. Arg-91 is a binding site for substrate. Catalysis depends on Asp-148, which acts as the Proton donor/acceptor. ATP-binding positions include His-208–Gly-212, Asp-283–Arg-285, and Gly-332–His-336. Glu-387 serves as a coordination point for Mg(2+).

It belongs to the acetokinase family. Homodimer. It depends on Mg(2+) as a cofactor. Mn(2+) is required as a cofactor.

It localises to the cytoplasm. It carries out the reaction acetate + ATP = acetyl phosphate + ADP. It functions in the pathway metabolic intermediate biosynthesis; acetyl-CoA biosynthesis; acetyl-CoA from acetate: step 1/2. Catalyzes the formation of acetyl phosphate from acetate and ATP. Can also catalyze the reverse reaction. The polypeptide is Acetate kinase (Clostridium beijerinckii (strain ATCC 51743 / NCIMB 8052) (Clostridium acetobutylicum)).